The following is a 199-amino-acid chain: MSEKPEKIVLASGNAGKLKEFGNLFEPYGITVLPQSEFSIPECPEPYSTFVENALAKARHAAGHSGLPALADDSGICAAALNGAPGIHSARYAGSNPKSDTANNLKLAAELAGKADKSCCYVCVLVFVRHKDDPRPIIAEGVWHGQWNGVPAGENGFGYDPYFYLPGHGKTAAELDSEVKNRESHRAQALAELLRKLAL.

A substrate-binding site is contributed by 12–17 (SGNAGK). The Proton acceptor role is filled by aspartate 73. Aspartate 73 is a Mg(2+) binding site. Residues serine 74, 157-160 (FGYD), lysine 180, and 185-186 (HR) contribute to the substrate site.

Belongs to the HAM1 NTPase family. In terms of assembly, homodimer. Mg(2+) serves as cofactor.

The catalysed reaction is XTP + H2O = XMP + diphosphate + H(+). It carries out the reaction dITP + H2O = dIMP + diphosphate + H(+). The enzyme catalyses ITP + H2O = IMP + diphosphate + H(+). In terms of biological role, pyrophosphatase that catalyzes the hydrolysis of nucleoside triphosphates to their monophosphate derivatives, with a high preference for the non-canonical purine nucleotides XTP (xanthosine triphosphate), dITP (deoxyinosine triphosphate) and ITP. Seems to function as a house-cleaning enzyme that removes non-canonical purine nucleotides from the nucleotide pool, thus preventing their incorporation into DNA/RNA and avoiding chromosomal lesions. The protein is dITP/XTP pyrophosphatase of Neisseria meningitidis serogroup A / serotype 4A (strain DSM 15465 / Z2491).